A 901-amino-acid polypeptide reads, in one-letter code: Aconitate hydratase A (901 aa).

[4Fe-4S] cluster is bound by residues C443, C509, and C512.

It belongs to the aconitase/IPM isomerase family. Monomer. The cofactor is [4Fe-4S] cluster.

The enzyme catalyses citrate = D-threo-isocitrate. It catalyses the reaction (2S,3R)-3-hydroxybutane-1,2,3-tricarboxylate = 2-methyl-cis-aconitate + H2O. Its pathway is carbohydrate metabolism; tricarboxylic acid cycle; isocitrate from oxaloacetate: step 2/2. It participates in organic acid metabolism; propanoate degradation. In terms of biological role, involved in the catabolism of short chain fatty acids (SCFA) via the tricarboxylic acid (TCA)(acetyl degradation route) and probably the 2-methylcitrate cycle I (propionate degradation route). Catalyzes the reversible isomerization of citrate to isocitrate via cis-aconitate. Could catalyze the hydration of 2-methyl-cis-aconitate to yield (2R,3S)-2-methylisocitrate. The apo form of AcnA functions as a RNA-binding regulatory protein. The sequence is that of Aconitate hydratase A (acnA) from Staphylococcus aureus (strain MRSA252).